We begin with the raw amino-acid sequence, 81 residues long: Cytochrome c oxidase subunit 7A1, mitochondrial (81 aa).

The N-terminal 21 residues, 1 to 21, are a transit peptide targeting the mitochondrion; that stretch reads MRHLLGLPQLASRAFSTTVRQ. Residues 51-72 form a helical membrane-spanning segment; that stretch reads ILYRLTMTLTVVGTGYSLYWLL.

Belongs to the cytochrome c oxidase VIIa family. As to quaternary structure, component of the complex IV (CIV, cytochrome c oxidase). The complex exists as a monomer or a dimer and forms supercomplexes (SCs) in the inner mitochondrial membrane with NADH-ubiquinone oxidoreductase (complex I, CI) and ubiquinol-cytochrome c oxidoreductase (cytochrome b-c1 complex, complex III, CIII), resulting in different assemblies (supercomplex SCI(1)III(2)IV(1) and megacomplex MCI(2)III(2)IV(2)).

The protein resides in the mitochondrion inner membrane. It participates in energy metabolism; oxidative phosphorylation. Component of the mitochondrial respiratory complex IV (CIV, also named cytochrome c oxidase complex), the last enzyme in the mitochondrial electron transport chain which drives oxidative phosphorylation. The CIV complex is the component of the respiratory chain that catalyzes the reduction of oxygen to water. Acts as an assembly factor that specifically drives the homodimerization of CIV complexes, mediating the formation of mitochondrial respiratory supercomplexes (respirasomes) containing two CIV: supercomplxes with two molecules of CIV show improved activity. The chain is Cytochrome c oxidase subunit 7A1, mitochondrial from Danio rerio (Zebrafish).